The following is a 120-amino-acid chain: NAD(P)H-quinone oxidoreductase subunit 3 (120 aa).

Transmembrane regions (helical) follow at residues 10 to 30, 64 to 84, and 89 to 109; these read LLVFLIVCALLPVLALGASAL, MFALVFVIFDVETVFLYPWAV, and LGLLAFVEALIFIAILVVGLV.

The protein belongs to the complex I subunit 3 family. In terms of assembly, NDH-1 can be composed of about 15 different subunits; different subcomplexes with different compositions have been identified which probably have different functions.

Its subcellular location is the cellular thylakoid membrane. It catalyses the reaction a plastoquinone + NADH + (n+1) H(+)(in) = a plastoquinol + NAD(+) + n H(+)(out). The enzyme catalyses a plastoquinone + NADPH + (n+1) H(+)(in) = a plastoquinol + NADP(+) + n H(+)(out). Functionally, NDH-1 shuttles electrons from an unknown electron donor, via FMN and iron-sulfur (Fe-S) centers, to quinones in the respiratory and/or the photosynthetic chain. The immediate electron acceptor for the enzyme in this species is believed to be plastoquinone. Couples the redox reaction to proton translocation, and thus conserves the redox energy in a proton gradient. Cyanobacterial NDH-1 also plays a role in inorganic carbon-concentration. This chain is NAD(P)H-quinone oxidoreductase subunit 3, found in Synechococcus sp. (strain JA-3-3Ab) (Cyanobacteria bacterium Yellowstone A-Prime).